Consider the following 582-residue polypeptide: Isopropyl malate synthase AMT7 (582 aa).

Residues 61-341 enclose the Pyruvate carboxyltransferase domain; the sequence is PVLFSTDLRD…EPGIDLSRLD (281 aa).

Belongs to the alpha-IPM synthase/homocitrate synthase family. LeuA type 2 subfamily.

The catalysed reaction is 3-methyl-2-oxobutanoate + acetyl-CoA + H2O = (2S)-2-isopropylmalate + CoA + H(+). Its pathway is mycotoxin biosynthesis. Isopropyl malate synthase; part of the gene clusters that mediate the biosynthesis of AM-toxins, host-selective toxins (HSTs) causing Alternaria blotch on apple, a worldwide distributed disease. AM-toxins are cyclic depsipeptides containing the 3 residues 2-hydroxy-isovaleric acid (2-HIV), dehydroalanine, L-alanine which are common for all 3 AM-toxins I to III. The fourth precursor is L-alpha-amino-methoxyphenyl-valeric acid (L-Amv) for AM-toxin I, L-alpha-amino-phenyl-valeric acid (L-Apv) for AM-toxin II, and L-alpha-amino-hydroxyphenyl-valeric acid (L-Ahv) for AM-toxin III. AM-toxins have two target sites for affecting susceptible apple cells; they cause invagination of the plasma membrane and electrolyte loss and chloroplast disorganization. The non-ribosomal peptide synthetase AMT1 contains 4 catalytic modules and is responsible for activation of each residue in AM-toxin. The aldo-keto reductase AMT2 catalyzes the conversion of 2-keto-isovaleric acid (2-KIV) to 2-hydroxy-isovaleric acid (2-HIV), one of the precursor residues incorporated by AMT1 during AM-toxin biosynthesis, by reduction of its ketone to an alcohol. The cytochrome P450 monooxygenase AMT3 and the thioesterase AMT4 are also important for AM-toxin production, but their exact function within the AM-toxin biosynthesis are not known yet. Up to 21 proteins (including AMT1 to AMT4) are predicted to be involved in AM-toxin biosynthesis since their expression ishighly up-regulated in AM-toxin-producing cultures. This is Isopropyl malate synthase AMT7 from Alternaria alternata (Alternaria rot fungus).